A 493-amino-acid polypeptide reads, in one-letter code: Cysteine sulfinic acid decarboxylase (493 aa).

Residue Lys305 is modified to N6-(pyridoxal phosphate)lysine.

The protein belongs to the group II decarboxylase family. In terms of assembly, homodimer. It depends on pyridoxal 5'-phosphate as a cofactor. As to expression, expressed in kidney and liver not detected in lymphoid tissues and lung. Expressed in kidney, liver and brain. 7 and 4 times higher expression in kidney and liver than in brain, respectively. Low level of detection in skeletal muscle. Expressed in brain, olfactory bulb, liver, skeletal muscle and kidney with the highest expression in liver and lowest in skeletal muscle (at protein level).

It carries out the reaction L-aspartate + H(+) = beta-alanine + CO2. The enzyme catalyses 3-sulfino-L-alanine + H(+) = hypotaurine + CO2. The catalysed reaction is L-cysteate + H(+) = taurine + CO2. The protein operates within organosulfur biosynthesis; taurine biosynthesis; hypotaurine from L-cysteine: step 2/2. With respect to regulation, activated by Mn(2+). Inhibited by bis-carboxymethyl-trithiocarbonate, ethylxanthogenacetic acid and 2,5-disulfoaniline. Not affected by Li(+) within 0.05-40 mM concentration range. Catalyzes the decarboxylation of L-aspartate, 3-sulfino-L-alanine (cysteine sulfinic acid), and L-cysteate to beta-alanine, hypotaurine and taurine, respectively. The preferred substrate is 3-sulfino-L-alanine. Does not exhibit any decarboxylation activity toward glutamate. This is Cysteine sulfinic acid decarboxylase from Mus musculus (Mouse).